Reading from the N-terminus, the 556-residue chain is 2-succinyl-5-enolpyruvyl-6-hydroxy-3-cyclohexene-1-carboxylate synthase (556 aa).

Belongs to the TPP enzyme family. MenD subfamily. Homodimer. Mg(2+) is required as a cofactor. The cofactor is Mn(2+). Requires thiamine diphosphate as cofactor.

The enzyme catalyses isochorismate + 2-oxoglutarate + H(+) = 5-enolpyruvoyl-6-hydroxy-2-succinyl-cyclohex-3-ene-1-carboxylate + CO2. The protein operates within quinol/quinone metabolism; 1,4-dihydroxy-2-naphthoate biosynthesis; 1,4-dihydroxy-2-naphthoate from chorismate: step 2/7. It participates in quinol/quinone metabolism; menaquinone biosynthesis. Catalyzes the thiamine diphosphate-dependent decarboxylation of 2-oxoglutarate and the subsequent addition of the resulting succinic semialdehyde-thiamine pyrophosphate anion to isochorismate to yield 2-succinyl-5-enolpyruvyl-6-hydroxy-3-cyclohexene-1-carboxylate (SEPHCHC). The sequence is that of 2-succinyl-5-enolpyruvyl-6-hydroxy-3-cyclohexene-1-carboxylate synthase from Shigella boydii serotype 18 (strain CDC 3083-94 / BS512).